A 112-amino-acid chain; its full sequence is Putative pterin-4-alpha-carbinolamine dehydratase (112 aa).

The protein belongs to the pterin-4-alpha-carbinolamine dehydratase family.

It catalyses the reaction (4aS,6R)-4a-hydroxy-L-erythro-5,6,7,8-tetrahydrobiopterin = (6R)-L-erythro-6,7-dihydrobiopterin + H2O. The sequence is that of Putative pterin-4-alpha-carbinolamine dehydratase from Shewanella loihica (strain ATCC BAA-1088 / PV-4).